A 918-amino-acid polypeptide reads, in one-letter code: Glutamate receptor ionotropic, kainate 1 (918 aa).

The signal sequence occupies residues 1–30; it reads MELGTLLAQPGLWTRDTSWALLYFLCYILP. The Extracellular portion of the chain corresponds to 31-576; the sequence is QTAPQVLRIG…VFSFLNPLSP (546 aa). Asparagine 68, asparagine 74, asparagine 276, asparagine 379, asparagine 428, asparagine 439, and asparagine 446 each carry an N-linked (GlcNAc...) asparagine glycan. The L-glutamate site is built by proline 531, threonine 533, and arginine 538. N-linked (GlcNAc...) asparagine glycosylation occurs at asparagine 561. Residues 577 to 597 traverse the membrane as a helical segment; the sequence is DIWMYVLLACLGVSCVLFVIA. The Cytoplasmic portion of the chain corresponds to 598–653; the sequence is RFTPYEWYNPHPCNPDSDVVENNFTLLNSFWFGVGALMQQGSELMPKALSTRIVGG. The chain crosses the membrane as a helical span at residues 654–674; it reads IWWFFTLIIISSYTANLAAFL. Over 675-834 the chain is Extracellular; that stretch reads TVERMESPID…KEASALGVEN (160 aa). Residues serine 704 and threonine 705 each contribute to the L-glutamate site. A Phosphoserine; by PKC modification is found at serine 725. Glutamate 753 is a binding site for L-glutamate. Threonine 761 is modified (phosphothreonine; by PKC). Residues cysteine 765 and cysteine 819 are joined by a disulfide bond. Asparagine 766 carries N-linked (GlcNAc...) asparagine glycosylation. Residues 835 to 855 form a helical membrane-spanning segment; sequence IGGIFIVLAAGLVLSVFVAIG. Residues 856–918 are Cytoplasmic-facing; that stretch reads EFIYKSRKNN…IRKQSSVHTV (63 aa).

Belongs to the glutamate-gated ion channel (TC 1.A.10.1) family. GRIK1 subfamily. As to quaternary structure, homotetramer or heterotetramer of pore-forming glutamate receptor subunits. Tetramers may be formed by the dimerization of dimers. Can form functional heteromeric receptors with GRIK4 and GRIK5. Interacts with KLHL17.

The protein resides in the cell membrane. Its subcellular location is the postsynaptic cell membrane. The catalysed reaction is Ca(2+)(in) = Ca(2+)(out). In terms of biological role, ionotropic glutamate receptor that functions as a cation-permeable ligand-gated ion channel, gated by L-glutamate and the glutamatergic agonist kainic acid. L-glutamate acts as an excitatory neurotransmitter at many synapses in the central nervous system. Binding of the excitatory neurotransmitter L-glutamate induces a conformation change, leading to the opening of the cation channel, and thereby converts the chemical signal to an electrical impulse. The receptor then desensitizes rapidly and enters a transient inactive state, characterized by the presence of bound agonist. The polypeptide is Glutamate receptor ionotropic, kainate 1 (GRIK1) (Macaca fascicularis (Crab-eating macaque)).